The sequence spans 88 residues: Putative carnobacteriocin-BM1 immunity protein (88 aa).

In terms of biological role, could impart immunity to carnobacteriocin-BM1 to naturally sensitive host strains. This chain is Putative carnobacteriocin-BM1 immunity protein, found in Carnobacterium maltaromaticum (Carnobacterium piscicola).